Here is a 147-residue protein sequence, read N- to C-terminus: UPF0735 ACT domain-containing protein GK2605 (147 aa).

The region spanning 69 to 144 is the ACT domain; that stretch reads TLFFHLEDRS…FVEKVEIVGS (76 aa).

This sequence belongs to the UPF0735 family.

The sequence is that of UPF0735 ACT domain-containing protein GK2605 from Geobacillus kaustophilus (strain HTA426).